Here is a 465-residue protein sequence, read N- to C-terminus: MSEPEIKVGKTSSALFDRAPMAPSMPGGRASSSHGLSVTDDIDARIWERIKDHPCFSEXAHHYFARMHXXVAPACNIQCNYCNRKYDCTNESCPXVASVKLTPDQALRKVLAVASKVPELSVIXVAGPGDACYDWRKTVATFEGVAREIPDMKLCISTNGLALPDHVDELADMNIDHVTITINMVDPEIGAKIYPWIIHGHRRYTGIAAAGILHERQMLGLELLTKRGILTKINSVMIPGVNDTHLVEVNRWIRDRGAFMHNVVPLISKPSHGTYYGLTGQRCPEPFELKALQDCLDGNIKLMRHCQQCRADAIGLLGDDREREFALDQISTKVEFDTSKREAYRKLVQHERGDQLAAKLDANKAVKSLGSSGTLAVAVATKGGGRINEHFGQARELQVYAVSLKGINLVGHXXVEQYCLGGIGEKATLDHTIVALDGIDILLSSKIGDCPKKRLAETGVRASDA.

The interval 1–36 is disordered; that stretch reads MSEPEIKVGKTSSALFDRAPMAPSMPGGRASSSHGL. Positions 61–312 constitute a Radical SAM core domain; it reads HHYFARMHXX…MRHCQQCRAD (252 aa). Residues Cys-75 and Cys-79 each coordinate [4Fe-4S] cluster. Residue Tyr-81 participates in S-adenosyl-L-methionine binding. Residue Cys-82 coordinates [4Fe-4S] cluster. S-adenosyl-L-methionine-binding residues include Gly-129, Thr-181, and Ile-233. [4Fe-4S] cluster-binding residues include Cys-306 and Cys-309.

The protein belongs to the radical SAM superfamily. NifB family. Requires [4Fe-4S] cluster as cofactor.

The protein operates within cofactor biosynthesis; Fe-Mo cofactor biosynthesis. Its function is as follows. Involved in the biosynthesis of the iron-molybdenum cofactor (FeMo-co or M-cluster) found in the dinitrogenase enzyme of the nitrogenase complex in nitrogen-fixing microorganisms. Catalyzes the crucial step of radical SAM-dependent carbide insertion that occurs concomitant with the insertion of a 9th sulfur and the rearrangement/coupling of two [4Fe-4S] clusters into a [8Fe-9S-C] cluster, the precursor to the M-cluster. The chain is FeMo cofactor biosynthesis protein FixZ (fixZ) from Rhizobium leguminosarum.